The following is a 458-amino-acid chain: Mitochondrial distribution and morphology protein 10 (458 aa).

Residues 307 to 339 (LDQRRTEPLDAPNTNSSVFSKERVQKKQGPKED) form a disordered region. Positions 326 to 339 (SKERVQKKQGPKED) are enriched in basic and acidic residues.

Belongs to the MDM10 family. As to quaternary structure, component of the ER-mitochondria encounter structure (ERMES) or MDM complex, composed of MMM1, MDM10, MDM12 and MDM34. Associates with the mitochondrial outer membrane sorting assembly machinery SAM(core) complex.

The protein resides in the mitochondrion outer membrane. Functionally, component of the ERMES/MDM complex, which serves as a molecular tether to connect the endoplasmic reticulum and mitochondria. Components of this complex are involved in the control of mitochondrial shape and protein biogenesis and may function in phospholipid exchange. MDM10 is involved in the late assembly steps of the general translocase of the mitochondrial outer membrane (TOM complex). Functions in the TOM40-specific route of the assembly of outer membrane beta-barrel proteins, including the association of TOM40 with the receptor TOM22 and small TOM proteins. Can associate with the SAM(core) complex as well as the MDM12-MMM1 complex, both involved in late steps of the major beta-barrel assembly pathway, that is responsible for biogenesis of all outer membrane beta-barrel proteins. May act as a switch that shuttles between both complexes and channels precursor proteins into the TOM40-specific pathway. Plays a role in mitochondrial morphology and in the inheritance of mitochondria. The protein is Mitochondrial distribution and morphology protein 10 of Lachancea thermotolerans (strain ATCC 56472 / CBS 6340 / NRRL Y-8284) (Yeast).